The following is a 365-amino-acid chain: Caffeic acid 3-O-methyltransferase 1 (365 aa).

Met130–Leu136 is a binding site for substrate. Residues Ala162 to Met180 are substrate binding. S-adenosyl-L-methionine-binding residues include Gly208, Asp231, Asp251, Met252, and Lys265. The active-site Proton acceptor is His269.

The protein belongs to the class I-like SAM-binding methyltransferase superfamily. Cation-independent O-methyltransferase family. COMT subfamily. Homodimer.

It catalyses the reaction (E)-caffeate + S-adenosyl-L-methionine = (E)-ferulate + S-adenosyl-L-homocysteine + H(+). It participates in aromatic compound metabolism; phenylpropanoid biosynthesis. Its function is as follows. Catalyzes the conversion of caffeic acid to ferulic acid and of 5-hydroxyferulic acid to sinapic acid. The resulting products may subsequently be converted to the corresponding alcohols that are incorporated into lignins. This Populus kitakamiensis (Aspen) protein is Caffeic acid 3-O-methyltransferase 1 (HOMT1).